A 278-amino-acid polypeptide reads, in one-letter code: Hydroxyethylthiazole kinase (278 aa).

Residue Met49 coordinates substrate. Residues Asn125 and Ser171 each contribute to the ATP site. Gly198 contributes to the substrate binding site.

The protein belongs to the Thz kinase family. Requires Mg(2+) as cofactor.

The enzyme catalyses 5-(2-hydroxyethyl)-4-methylthiazole + ATP = 4-methyl-5-(2-phosphooxyethyl)-thiazole + ADP + H(+). The protein operates within cofactor biosynthesis; thiamine diphosphate biosynthesis; 4-methyl-5-(2-phosphoethyl)-thiazole from 5-(2-hydroxyethyl)-4-methylthiazole: step 1/1. Its function is as follows. Catalyzes the phosphorylation of the hydroxyl group of 4-methyl-5-beta-hydroxyethylthiazole (THZ). This Natronomonas pharaonis (strain ATCC 35678 / DSM 2160 / CIP 103997 / JCM 8858 / NBRC 14720 / NCIMB 2260 / Gabara) (Halobacterium pharaonis) protein is Hydroxyethylthiazole kinase.